The primary structure comprises 680 residues: Lipase 1 (680 aa).

Residues 1–34 (MKSQNKYSIRKFSVGASSILIATLLFLSGGQAQA) form the signal peptide. A propeptide spanning residues 35 to 290 (AEKQVNMGNS…AKAKDDQTNK (256 aa)) is cleaved from the precursor. The disordered stretch occupies residues 82-259 (KNLHNDKTIS…PTKDNDKKNG (178 aa)). The segment covering 84 to 111 (LHNDKTISEENHRKTDDLNKDQLKDDKN) has biased composition (basic and acidic residues). 3 stretches are compositionally biased toward polar residues: residues 125 to 138 (KNNNANPSDVNQGL), 162 to 193 (SQDSNANNNLPSQSLTKEAPSLNKSDQTSQRE), and 204 to 223 (QPQQNNQANDKITNHNFNNE). A compositionally biased stretch (basic and acidic residues) spans 224-234 (QEVKPQKDEKT). The span at 235-246 (LSVSDLKNNQKS) shows a compositional bias: polar residues. The active-site Nucleophile is serine 408. Aspartate 600 functions as the Charge relay system in the catalytic mechanism. Aspartate 638 is a Ca(2+) binding site. Catalysis depends on histidine 639, which acts as the Charge relay system. Residues aspartate 641, aspartate 646, and aspartate 649 each contribute to the Ca(2+) site.

Belongs to the AB hydrolase superfamily. Lipase family.

It localises to the secreted. It catalyses the reaction a triacylglycerol + H2O = a diacylglycerol + a fatty acid + H(+). The sequence is that of Lipase 1 (lip1) from Staphylococcus aureus (strain Mu50 / ATCC 700699).